The sequence spans 143 residues: UPF0201 protein Tneu_0685 (143 aa).

It belongs to the UPF0201 family.

The protein is UPF0201 protein Tneu_0685 of Pyrobaculum neutrophilum (strain DSM 2338 / JCM 9278 / NBRC 100436 / V24Sta) (Thermoproteus neutrophilus).